The chain runs to 396 residues: Elongation factor Tu 1 (396 aa).

The region spanning 10–206 (KPHCNVGTIG…AVDDYIPQPE (197 aa)) is the tr-type G domain. The segment at 19–26 (GHVDHGKT) is G1. 19–26 (GHVDHGKT) is a GTP binding site. Thr-26 is a Mg(2+) binding site. The segment at 60–64 (GITIS) is G2. The tract at residues 81-84 (DCPG) is G3. GTP contacts are provided by residues 81–85 (DCPGH) and 136–139 (NKCD). The G4 stretch occupies residues 136–139 (NKCD). A G5 region spans residues 174–176 (SAL).

Belongs to the TRAFAC class translation factor GTPase superfamily. Classic translation factor GTPase family. EF-Tu/EF-1A subfamily. In terms of assembly, monomer.

It is found in the cytoplasm. It carries out the reaction GTP + H2O = GDP + phosphate + H(+). Functionally, GTP hydrolase that promotes the GTP-dependent binding of aminoacyl-tRNA to the A-site of ribosomes during protein biosynthesis. This chain is Elongation factor Tu 1, found in Rhodospirillum rubrum (strain ATCC 11170 / ATH 1.1.1 / DSM 467 / LMG 4362 / NCIMB 8255 / S1).